The sequence spans 389 residues: MKKQFGKFGGQYVSKELTSTLKNLEENFFKYCNDDDFKKEYIYYLNNYIGRPSLLYYAKRLTKSLGGAKIYLKREDLNHTGAHKINNAIGQILLAKRMGKKKVIAETGAGQHGVATATAAALFGMECTIFMGEEDIKRQKLNTFKMELLGAKIKPVKSGNGTLKDAVDEAIKQWVKSSDDTFYVLGSAVGPHPYPTMVREFQKIIGEETKDQILRMEGRLPDTLIACVGGGSNAIGLFYPFIKDENIEIIGVEAGGKGVETGEHGAAFADGRVGVIHGMKTVIMEDDNGNVKEAYSISAGLDYPGVGPEHAYLNDIGRAKYVSITDEEAVEAFKYLCANEGIIPALESSHAIAYTMKLAPNMDKDKIIVVNLSGRGDKDVETISEYLNK.

Lys84 carries the N6-(pyridoxal phosphate)lysine modification.

This sequence belongs to the TrpB family. As to quaternary structure, tetramer of two alpha and two beta chains. Pyridoxal 5'-phosphate serves as cofactor.

The catalysed reaction is (1S,2R)-1-C-(indol-3-yl)glycerol 3-phosphate + L-serine = D-glyceraldehyde 3-phosphate + L-tryptophan + H2O. Its pathway is amino-acid biosynthesis; L-tryptophan biosynthesis; L-tryptophan from chorismate: step 5/5. Functionally, the beta subunit is responsible for the synthesis of L-tryptophan from indole and L-serine. The sequence is that of Tryptophan synthase beta chain from Clostridium novyi (strain NT).